We begin with the raw amino-acid sequence, 336 residues long: Holliday junction branch migration complex subunit RuvB (336 aa).

Residues 4–184 (ADRLISAGAT…FGIVQRLEFY (181 aa)) form a large ATPase domain (RuvB-L) region. ATP-binding positions include Ile23, Arg24, Gly65, Lys68, Thr69, Thr70, 131–133 (EDY), Arg174, Tyr184, and Arg221. Thr69 contributes to the Mg(2+) binding site. The small ATPAse domain (RuvB-S) stretch occupies residues 185-255 (QVPDLQHIVG…IAAQALDMLN (71 aa)). A head domain (RuvB-H) region spans residues 258–336 (AEGFDYMDRK…HFGITPPEMP (79 aa)). Residues Arg294, Arg313, and Arg318 each coordinate DNA.

The protein belongs to the RuvB family. Homohexamer. Forms an RuvA(8)-RuvB(12)-Holliday junction (HJ) complex. HJ DNA is sandwiched between 2 RuvA tetramers; dsDNA enters through RuvA and exits via RuvB. An RuvB hexamer assembles on each DNA strand where it exits the tetramer. Each RuvB hexamer is contacted by two RuvA subunits (via domain III) on 2 adjacent RuvB subunits; this complex drives branch migration. In the full resolvosome a probable DNA-RuvA(4)-RuvB(12)-RuvC(2) complex forms which resolves the HJ.

The protein localises to the cytoplasm. It carries out the reaction ATP + H2O = ADP + phosphate + H(+). Its function is as follows. The RuvA-RuvB-RuvC complex processes Holliday junction (HJ) DNA during genetic recombination and DNA repair, while the RuvA-RuvB complex plays an important role in the rescue of blocked DNA replication forks via replication fork reversal (RFR). RuvA specifically binds to HJ cruciform DNA, conferring on it an open structure. The RuvB hexamer acts as an ATP-dependent pump, pulling dsDNA into and through the RuvAB complex. RuvB forms 2 homohexamers on either side of HJ DNA bound by 1 or 2 RuvA tetramers; 4 subunits per hexamer contact DNA at a time. Coordinated motions by a converter formed by DNA-disengaged RuvB subunits stimulates ATP hydrolysis and nucleotide exchange. Immobilization of the converter enables RuvB to convert the ATP-contained energy into a lever motion, pulling 2 nucleotides of DNA out of the RuvA tetramer per ATP hydrolyzed, thus driving DNA branch migration. The RuvB motors rotate together with the DNA substrate, which together with the progressing nucleotide cycle form the mechanistic basis for DNA recombination by continuous HJ branch migration. Branch migration allows RuvC to scan DNA until it finds its consensus sequence, where it cleaves and resolves cruciform DNA. This Salmonella agona (strain SL483) protein is Holliday junction branch migration complex subunit RuvB.